The chain runs to 105 residues: Nitrogen fixation nifHD region GlnB-like protein 1 (105 aa).

The protein belongs to the P(II) protein family.

Functionally, could be involved in the regulation of nitrogen fixation. This chain is Nitrogen fixation nifHD region GlnB-like protein 1 (glnBA), found in Methanothermobacter marburgensis (strain ATCC BAA-927 / DSM 2133 / JCM 14651 / NBRC 100331 / OCM 82 / Marburg) (Methanobacterium thermoautotrophicum).